The primary structure comprises 303 residues: Diaminopimelate epimerase (303 aa).

Substrate contacts are provided by N15 and N72. C81 functions as the Proton donor in the catalytic mechanism. Residues 82–83 (GN), N169, N202, and 220–221 (ER) contribute to the substrate site. The active-site Proton acceptor is the C229. Substrate is bound at residue 230–231 (GT).

Belongs to the diaminopimelate epimerase family. In terms of assembly, homodimer.

The protein resides in the cytoplasm. It catalyses the reaction (2S,6S)-2,6-diaminopimelate = meso-2,6-diaminopimelate. The protein operates within amino-acid biosynthesis; L-lysine biosynthesis via DAP pathway; DL-2,6-diaminopimelate from LL-2,6-diaminopimelate: step 1/1. Catalyzes the stereoinversion of LL-2,6-diaminopimelate (L,L-DAP) to meso-diaminopimelate (meso-DAP), a precursor of L-lysine and an essential component of the bacterial peptidoglycan. The chain is Diaminopimelate epimerase from Prochlorococcus marinus (strain MIT 9313).